Consider the following 310-residue polypeptide: Lipoyl synthase (310 aa).

Residues C41, C46, C52, C68, C72, C75, and S281 each contribute to the [4Fe-4S] cluster site. The Radical SAM core domain maps to 54 to 270; it reads GERRTATFMI…RKVAMEKGFK (217 aa). The tract at residues 285–310 is disordered; that stretch reads DEQVNEAAKERQRIGDEKLEAAKNEA.

It belongs to the radical SAM superfamily. Lipoyl synthase family. [4Fe-4S] cluster is required as a cofactor.

It is found in the cytoplasm. It catalyses the reaction [[Fe-S] cluster scaffold protein carrying a second [4Fe-4S](2+) cluster] + N(6)-octanoyl-L-lysyl-[protein] + 2 oxidized [2Fe-2S]-[ferredoxin] + 2 S-adenosyl-L-methionine + 4 H(+) = [[Fe-S] cluster scaffold protein] + N(6)-[(R)-dihydrolipoyl]-L-lysyl-[protein] + 4 Fe(3+) + 2 hydrogen sulfide + 2 5'-deoxyadenosine + 2 L-methionine + 2 reduced [2Fe-2S]-[ferredoxin]. It participates in protein modification; protein lipoylation via endogenous pathway; protein N(6)-(lipoyl)lysine from octanoyl-[acyl-carrier-protein]. Functionally, catalyzes the radical-mediated insertion of two sulfur atoms into the C-6 and C-8 positions of the octanoyl moiety bound to the lipoyl domains of lipoate-dependent enzymes, thereby converting the octanoylated domains into lipoylated derivatives. This Staphylococcus carnosus (strain TM300) protein is Lipoyl synthase.